Reading from the N-terminus, the 273-residue chain is Large ribosomal subunit protein uL2 (273 aa).

Residues 221 to 263 (RGTAMNPVDHPHGGGEGRNFGKHPVSPWGLQTKGKKTRKNKRT) form a disordered region. Basic residues predominate over residues 253–263 (KGKKTRKNKRT).

It belongs to the universal ribosomal protein uL2 family. Part of the 50S ribosomal subunit. Forms a bridge to the 30S subunit in the 70S ribosome.

In terms of biological role, one of the primary rRNA binding proteins. Required for association of the 30S and 50S subunits to form the 70S ribosome, for tRNA binding and peptide bond formation. It has been suggested to have peptidyltransferase activity; this is somewhat controversial. Makes several contacts with the 16S rRNA in the 70S ribosome. The sequence is that of Large ribosomal subunit protein uL2 from Buchnera aphidicola subsp. Baizongia pistaciae (strain Bp).